A 544-amino-acid chain; its full sequence is CTP synthase (544 aa).

The interval 1-266 (MIRYIFITGG…DSEVLSHFGI (266 aa)) is amidoligase domain. Serine 13 contributes to the CTP binding site. Position 13 (serine 13) interacts with UTP. Residues 14–19 (SLGKGI) and aspartate 71 each bind ATP. Mg(2+)-binding residues include aspartate 71 and glutamate 140. CTP-binding positions include 147 to 149 (DIE), 187 to 192 (KTKPTQ), and lysine 223. UTP contacts are provided by residues 187–192 (KTKPTQ) and lysine 223. Residue 239–241 (RDV) participates in ATP binding. Positions 292–543 (TIGLVGKYTD…IAAAVKQSRL (252 aa)) constitute a Glutamine amidotransferase type-1 domain. Glycine 355 is an L-glutamine binding site. Cysteine 382 serves as the catalytic Nucleophile; for glutamine hydrolysis. Residues 383 to 386 (YGMQ), glutamate 406, and arginine 471 each bind L-glutamine. Active-site residues include histidine 516 and glutamate 518.

It belongs to the CTP synthase family. In terms of assembly, homotetramer.

The enzyme catalyses UTP + L-glutamine + ATP + H2O = CTP + L-glutamate + ADP + phosphate + 2 H(+). It carries out the reaction L-glutamine + H2O = L-glutamate + NH4(+). It catalyses the reaction UTP + NH4(+) + ATP = CTP + ADP + phosphate + 2 H(+). Its pathway is pyrimidine metabolism; CTP biosynthesis via de novo pathway; CTP from UDP: step 2/2. Allosterically activated by GTP, when glutamine is the substrate; GTP has no effect on the reaction when ammonia is the substrate. The allosteric effector GTP functions by stabilizing the protein conformation that binds the tetrahedral intermediate(s) formed during glutamine hydrolysis. Inhibited by the product CTP, via allosteric rather than competitive inhibition. In terms of biological role, catalyzes the ATP-dependent amination of UTP to CTP with either L-glutamine or ammonia as the source of nitrogen. Regulates intracellular CTP levels through interactions with the four ribonucleotide triphosphates. The chain is CTP synthase from Hyphomonas neptunium (strain ATCC 15444).